The primary structure comprises 171 residues: Cation channel sperm-associated auxiliary subunit TMEM249 (171 aa).

The Cytoplasmic segment spans residues 1 to 2 (ML). Residues 3–17 (FIICLVFISCNVLRE) traverse the membrane as a helical segment. The Extracellular segment spans residues 18–28 (VKYQETWCFPA). The helical transmembrane segment at 29–40 (YGMVIGLWLMLS) threads the bilayer. Over 41–171 (SIPQRRLVLN…TKSSVNDLDV (131 aa)) the chain is Cytoplasmic.

Component of the CatSper complex or CatSpermasome composed of the core pore-forming members CATSPER1, CATSPER2, CATSPER3 and CATSPER4 as well as auxiliary members CATSPERB, CATSPERG2, CATSPERD, CATSPERE, CATSPERZ, C2CD6/CATSPERT, SLCO6C1, TMEM249, TMEM262 and EFCAB9. HSPA1 may be an additional auxiliary complex member. The core complex members CATSPER1, CATSPER2, CATSPER3 and CATSPER4 form a heterotetrameric channel. The auxiliary CATSPERB, CATSPERG2, CATSPERD and CATSPERE subunits form a pavilion-like structure over the pore which stabilizes the complex through interactions with CATSPER4, CATSPER3, CATSPER1 and CATSPER2 respectively. SLCO6C1 interacts with CATSPERE and TMEM262/CATSPERH interacts with CATSPERB, further stabilizing the complex. C2CD6/CATSPERT interacts at least with CATSPERD and is required for targeting the CatSper complex in the flagellar membrane.

Its subcellular location is the cell projection. The protein resides in the cilium. It is found in the flagellum membrane. Functionally, auxiliary component of the CatSper complex, a complex involved in sperm cell hyperactivation. This is Cation channel sperm-associated auxiliary subunit TMEM249 from Mus musculus (Mouse).